The primary structure comprises 76 residues: Conotoxin VnMSGL-0112 (76 aa).

The N-terminal stretch at 1–20 is a signal peptide; that stretch reads MSGLGIMVLTLLLLVSMATS. The propeptide occupies 21–45; the sequence is HQDGRGKQATQRDAINVRRRRSITR. Intrachain disulfides connect C49–C61, C53–C70, and C60–C74.

This sequence belongs to the conotoxin O3 superfamily. As to expression, expressed by the venom duct.

It is found in the secreted. The sequence is that of Conotoxin VnMSGL-0112 from Conus ventricosus (Mediterranean cone).